Reading from the N-terminus, the 138-residue chain is MSARRTSREIAVMALYQLELTGPPLKEVLKFKWYDKKTEPEERDFAVSIVNGVVKNQEQIDTLIKKYSKNWDFSRISIVNKAILRLSVFALLYSWEVPKNVTIDEAVELTKEFESEESARFVNGILDAILKNETKSDG.

Belongs to the NusB family.

Functionally, involved in transcription antitermination. Required for transcription of ribosomal RNA (rRNA) genes. Binds specifically to the boxA antiterminator sequence of the ribosomal RNA (rrn) operons. The chain is Transcription antitermination protein NusB from Leptospira borgpetersenii serovar Hardjo-bovis (strain JB197).